The sequence spans 305 residues: tRNA pseudouridine synthase B (305 aa).

Asp48 acts as the Nucleophile in catalysis.

This sequence belongs to the pseudouridine synthase TruB family. Type 1 subfamily.

The catalysed reaction is uridine(55) in tRNA = pseudouridine(55) in tRNA. Functionally, responsible for synthesis of pseudouridine from uracil-55 in the psi GC loop of transfer RNAs. The polypeptide is tRNA pseudouridine synthase B (Pseudomonas syringae pv. syringae (strain B728a)).